A 406-amino-acid polypeptide reads, in one-letter code: Argininosuccinate synthase (406 aa).

ATP contacts are provided by residues 12–20 (AYSGGLDTS) and A39. L-citrulline-binding residues include Y90 and S95. G120 lines the ATP pocket. 3 residues coordinate L-aspartate: T122, N126, and D127. N126 provides a ligand contact to L-citrulline. Residues R130, S179, S188, E264, and Y276 each contribute to the L-citrulline site.

Belongs to the argininosuccinate synthase family. Type 1 subfamily. As to quaternary structure, homotetramer.

It localises to the cytoplasm. The catalysed reaction is L-citrulline + L-aspartate + ATP = 2-(N(omega)-L-arginino)succinate + AMP + diphosphate + H(+). The protein operates within amino-acid biosynthesis; L-arginine biosynthesis; L-arginine from L-ornithine and carbamoyl phosphate: step 2/3. In Geobacter sp. (strain M21), this protein is Argininosuccinate synthase.